A 93-amino-acid polypeptide reads, in one-letter code: Alpha-defensin 22 (93 aa).

The N-terminal stretch at 1–19 (MKKLVLLSALVLLAYQVQT) is a signal peptide. Residues 20–58 (DPIQNTDEETNTEEQPGEEDQAVSVSFGGQEGSALHEKL) constitute a propeptide that is removed on maturation. The interval 22 to 41 (IQNTDEETNTEEQPGEEDQA) is disordered. Over residues 25 to 40 (TDEETNTEEQPGEEDQ) the composition is skewed to acidic residues. 3 cysteine pairs are disulfide-bonded: Cys-64/Cys-89, Cys-66/Cys-81, and Cys-71/Cys-88.

It belongs to the alpha-defensin family.

It localises to the secreted. Functionally, may have microbicidal activities. The chain is Alpha-defensin 22 (Defa22) from Mus musculus (Mouse).